We begin with the raw amino-acid sequence, 131 residues long: D-ribose pyranase (131 aa).

His-20 (proton donor) is an active-site residue. Substrate-binding positions include Asp-28, His-98, and 120–122; that span reads YSN.

This sequence belongs to the RbsD / FucU family. RbsD subfamily. As to quaternary structure, homodecamer.

Its subcellular location is the cytoplasm. The enzyme catalyses beta-D-ribopyranose = beta-D-ribofuranose. Its pathway is carbohydrate metabolism; D-ribose degradation; D-ribose 5-phosphate from beta-D-ribopyranose: step 1/2. Catalyzes the interconversion of beta-pyran and beta-furan forms of D-ribose. In Lactiplantibacillus plantarum (strain ATCC BAA-793 / NCIMB 8826 / WCFS1) (Lactobacillus plantarum), this protein is D-ribose pyranase.